The chain runs to 283 residues: Zinc-finger homeodomain protein 8 (283 aa).

A ZF-HD dimerization-type; degenerate zinc finger spans residues 23–68; it reads YKECMRNHAAAMGGQAFDGCGEYMPASPDSLKCAACGCHRSFHRRA. Disordered regions lie at residues 131–171 and 244–283; these read AGRA…TKFT and GLGT…PISV. Over residues 148-161 the composition is skewed to gly residues; it reads GSAGGSGSGGGGIF. The homeobox DNA-binding region spans 163 to 226; the sequence is RKRFRTKFTP…NHKNQLASSP (64 aa). Residues 244-256 show a composition bias toward gly residues; sequence GLGTGLGTGISGD. Over residues 257–266 the composition is skewed to acidic residues; that stretch reads GDGDDDDTDD. A compositionally biased stretch (low complexity) spans 269 to 283; the sequence is PRAAVSSPSPSPISV.

As to quaternary structure, homo- and heterodimer with other ZFHD proteins.

Its subcellular location is the nucleus. Functionally, putative transcription factor. The polypeptide is Zinc-finger homeodomain protein 8 (ZHD8) (Oryza sativa subsp. japonica (Rice)).